Consider the following 147-residue polypeptide: MAGSKSPKGEFAGRKLLLKRKASRWHHYKYVNKALSLKLKADPLEGAPMGRGIVVEKVGLEAKQPNSAIRKCVRVQLIKNGRQVTAFAPGNHAINFIDEHDEVVIEGIGGPSGQAKGDIPGVRYKVVMVGKNSIRELVRGRQEKVKR.

Belongs to the universal ribosomal protein uS12 family. Part of the 30S ribosomal subunit.

With S4 and S5 plays an important role in translational accuracy. Located at the interface of the 30S and 50S subunits. The protein is Small ribosomal subunit protein uS12 of Methanococcus maripaludis (strain C5 / ATCC BAA-1333).